A 1128-amino-acid chain; its full sequence is Nck-associated protein 1 (1128 aa).

The interval alanine 640–methionine 665 is disordered. The segment covering lysine 651–methionine 665 has biased composition (basic and acidic residues). A helical membrane pass occupies residues isoleucine 995 to methionine 1015.

Belongs to the HEM-1/HEM-2 family.

It is found in the cell membrane. The protein localises to the cell projection. The protein resides in the lamellipodium membrane. Functionally, part of the WAVE complex that regulates lamellipodia formation. The WAVE complex regulates actin filament reorganization via its interaction with the Arp2/3 complex. Actin remodeling activity is regulated by RAC1. Plays a role in neural tube closure. The sequence is that of Nck-associated protein 1 (nckap1) from Danio rerio (Zebrafish).